The chain runs to 434 residues: Quinolone resistance transporter (434 aa).

The next 12 helical transmembrane spans lie at 15 to 35 (LIPALVILYLVAYIDRAAVGF), 45 to 65 (GIGDAAYGLGAGLFFIGYFLF), 85 to 105 (ILLTWGLITMAMALIQGPKSF), 110 to 130 (FLLGVAEAGFFPGVLYLITQW), 142 to 162 (MFVLSQPIAMMIAGPLAGLLL), 175 to 195 (WLFVAVGLPAVLLALPTFLWL), 241 to 261 (VLLLALYYLPVTLSIYGLNLW), 275 to 295 (IQIGFLSSIPYIFGIIGLLII), 306 to 326 (YGHLSFLYALGACAMFLSGWL), 333 to 353 (LAALAVVAFCLFSSTAVFWTL), 367 to 387 (IALINSVGNLGGYVGPFGIGL), and 396 to 416 (AAGLYFLSIVMLFGLILTYIV).

This sequence belongs to the major facilitator superfamily.

Its subcellular location is the cell inner membrane. Its function is as follows. Efflux pump that mediates resistance to quinolone-type antibiotics. The polypeptide is Quinolone resistance transporter (Acinetobacter baumannii).